A 302-amino-acid chain; its full sequence is Putative S-adenosyl-L-methionine-dependent methyltransferase MAV_2803 (302 aa).

Residues aspartate 129 and 158 to 159 each bind S-adenosyl-L-methionine; that span reads DL.

This sequence belongs to the UPF0677 family.

In terms of biological role, exhibits S-adenosyl-L-methionine-dependent methyltransferase activity. This is Putative S-adenosyl-L-methionine-dependent methyltransferase MAV_2803 from Mycobacterium avium (strain 104).